Here is a 126-residue protein sequence, read N- to C-terminus: S-adenosylmethionine decarboxylase proenzyme (126 aa).

The Schiff-base intermediate with substrate; via pyruvic acid role is filled by Ser63. Ser63 is modified (pyruvic acid (Ser); by autocatalysis). Residue His68 is the Proton acceptor; for processing activity of the active site. The Proton donor; for catalytic activity role is filled by Cys83.

The protein belongs to the prokaryotic AdoMetDC family. Type 1 subfamily. In terms of assembly, heterotetramer of two alpha and two beta chains arranged as a dimer of alpha/beta heterodimers. Pyruvate serves as cofactor. Is synthesized initially as an inactive proenzyme. Formation of the active enzyme involves a self-maturation process in which the active site pyruvoyl group is generated from an internal serine residue via an autocatalytic post-translational modification. Two non-identical subunits are generated from the proenzyme in this reaction, and the pyruvate is formed at the N-terminus of the alpha chain, which is derived from the carboxyl end of the proenzyme. The post-translation cleavage follows an unusual pathway, termed non-hydrolytic serinolysis, in which the side chain hydroxyl group of the serine supplies its oxygen atom to form the C-terminus of the beta chain, while the remainder of the serine residue undergoes an oxidative deamination to produce ammonia and the pyruvoyl group blocking the N-terminus of the alpha chain.

It carries out the reaction S-adenosyl-L-methionine + H(+) = S-adenosyl 3-(methylsulfanyl)propylamine + CO2. Its pathway is amine and polyamine biosynthesis; S-adenosylmethioninamine biosynthesis; S-adenosylmethioninamine from S-adenosyl-L-methionine: step 1/1. In terms of biological role, catalyzes the decarboxylation of S-adenosylmethionine to S-adenosylmethioninamine (dcAdoMet), the propylamine donor required for the synthesis of the polyamines spermine and spermidine from the diamine putrescine. This chain is S-adenosylmethionine decarboxylase proenzyme, found in Clostridium kluyveri (strain NBRC 12016).